We begin with the raw amino-acid sequence, 707 residues long: Potassium-transporting ATPase ATP-binding subunit (707 aa).

Residues 1–11 (MNTDTQKHEDA) show a composition bias toward basic and acidic residues. The tract at residues 1–37 (MNTDTQKHEDAMSTTTPARAPHDDAPSGQQPGQGRVG) is disordered. Helical transmembrane passes span 61 to 81 (VMAK…TTAF), 89 to 109 (WFGW…NLAE), 238 to 258 (IALN…CATL), and 271 to 291 (MIVL…ALLS). Residue Asp326 is the 4-aspartylphosphate intermediate of the active site. ATP is bound by residues Asp363, Glu367, 397 to 404 (FTAQTRMS), and Lys415. Residues Asp542 and Asp546 each coordinate Mg(2+). Helical transmembrane passes span 612–632 (FAII…LNIM), 640–660 (AILS…PLAL), and 683–703 (LGGL…VSLI).

Belongs to the cation transport ATPase (P-type) (TC 3.A.3) family. Type IA subfamily. In terms of assembly, the system is composed of three essential subunits: KdpA, KdpB and KdpC.

The protein localises to the cell membrane. It catalyses the reaction K(+)(out) + ATP + H2O = K(+)(in) + ADP + phosphate + H(+). In terms of biological role, part of the high-affinity ATP-driven potassium transport (or Kdp) system, which catalyzes the hydrolysis of ATP coupled with the electrogenic transport of potassium into the cytoplasm. This subunit is responsible for energy coupling to the transport system and for the release of the potassium ions to the cytoplasm. This Streptomyces coelicolor (strain ATCC BAA-471 / A3(2) / M145) protein is Potassium-transporting ATPase ATP-binding subunit.